The sequence spans 91 residues: Acylphosphatase (91 aa).

In terms of domain architecture, Acylphosphatase-like spans Thr-3 to Tyr-91. Residues Arg-18 and Asn-36 contribute to the active site.

Belongs to the acylphosphatase family.

The enzyme catalyses an acyl phosphate + H2O = a carboxylate + phosphate + H(+). The polypeptide is Acylphosphatase (acyP) (Lactobacillus johnsonii (strain CNCM I-12250 / La1 / NCC 533)).